A 215-amino-acid polypeptide reads, in one-letter code: Octanoyltransferase (215 aa).

A BPL/LPL catalytic domain is found at Thr31–Glu206. Substrate-binding positions include Arg70 to His77, Ser137 to Gly139, and Gly150 to Ala152. The Acyl-thioester intermediate role is filled by Cys168.

The protein belongs to the LipB family.

It localises to the cytoplasm. The catalysed reaction is octanoyl-[ACP] + L-lysyl-[protein] = N(6)-octanoyl-L-lysyl-[protein] + holo-[ACP] + H(+). It participates in protein modification; protein lipoylation via endogenous pathway; protein N(6)-(lipoyl)lysine from octanoyl-[acyl-carrier-protein]: step 1/2. In terms of biological role, catalyzes the transfer of endogenously produced octanoic acid from octanoyl-acyl-carrier-protein onto the lipoyl domains of lipoate-dependent enzymes. Lipoyl-ACP can also act as a substrate although octanoyl-ACP is likely to be the physiological substrate. The chain is Octanoyltransferase from Pseudomonas fluorescens (strain SBW25).